The sequence spans 153 residues: HTH-type transcriptional regulator Zrp (153 aa).

The 62-residue stretch at 2–63 (IDYRDRHILS…LLDRKKINLP (62 aa)) folds into the HTH asnC-type domain. A DNA-binding region (H-T-H motif) is located at residues 21-40 (LAEIAERVALSVSACSRRVA).

This chain is HTH-type transcriptional regulator Zrp (zrp), found in Zymomonas mobilis subsp. mobilis (strain ATCC 10988 / DSM 424 / LMG 404 / NCIMB 8938 / NRRL B-806 / ZM1).